We begin with the raw amino-acid sequence, 136 residues long: uncharacterized protein (136 aa).

2 disordered regions span residues Q23–N44 and D56–R95. Residues S61–E79 show a composition bias toward low complexity. Residues E80–E91 show a composition bias toward acidic residues.

This is an uncharacterized protein from Saccharomyces cerevisiae (strain ATCC 204508 / S288c) (Baker's yeast).